A 475-amino-acid chain; its full sequence is UDP-N-acetylmuramate--L-alanine ligase (475 aa).

ATP is bound at residue 114-120; sequence GTHGKTT.

This sequence belongs to the MurCDEF family.

The protein localises to the cytoplasm. It catalyses the reaction UDP-N-acetyl-alpha-D-muramate + L-alanine + ATP = UDP-N-acetyl-alpha-D-muramoyl-L-alanine + ADP + phosphate + H(+). The protein operates within cell wall biogenesis; peptidoglycan biosynthesis. Its function is as follows. Cell wall formation. This chain is UDP-N-acetylmuramate--L-alanine ligase, found in Bartonella tribocorum (strain CIP 105476 / IBS 506).